Consider the following 222-residue polypeptide: MQFNPGPPAGFHAPPAKQKACTVTFFLFTPDILNYIVLPVLIFLAQIANVCMETLRIVFLSKGMKYLAPVIAFFEIIIWLLAIVGVLNNLSNIAYFLAYAFGFALGTYVGLVIEEKLSIGMVIMRIITTDGSGDGITEYLQQENYGTTCLDAKGARGGVKMIISLVNRDDVPRITRHIEETNPGAFFSIEDVRYVNQGVFRPKKQNPFTGFIHTLARPRKRV.

A run of 3 helical transmembrane segments spans residues F25–A45, L67–L87, and I93–I113.

The protein belongs to the UPF0316 family.

It localises to the cell membrane. The chain is UPF0316 protein Mboo_0791 from Methanoregula boonei (strain DSM 21154 / JCM 14090 / 6A8).